Reading from the N-terminus, the 212-residue chain is Ras-related protein Rab-2A (212 aa).

Ala2 is modified (N-acetylalanine). The segment at 2–19 (AYAYLFKYIIIGDTGVGK) is required for interaction with PRKCI. Residues Gly16, Val17, Gly18, Lys19, Ser20, Cys21, and Thr38 each contribute to the GTP site. Ser20 provides a ligand contact to Mg(2+). A Switch 1 motif is present at residues 37–42 (LTMGVE). The Mg(2+) site is built by Thr38 and Asp61. The Switch 2 signature appears at 63-72 (AGQESFRSIT). GTP-binding residues include Gly64, Asn119, Lys120, Asp122, Ala150, and Lys151. The interval 190-212 (QHAATNASHGGNQGGQQAGGGCC) is disordered. The span at 200–212 (GNQGGQQAGGGCC) shows a compositional bias: gly residues. S-geranylgeranyl cysteine attachment occurs at residues Cys211 and Cys212.

Belongs to the small GTPase superfamily. Rab family. Interacts with PRKCI. Interacts with TRIP11. Interacts (in GTP-bound form) with GARIN1B. Interacts (GTP-bound) with HOPS complex component VPS39; interaction contributes to obtaining a functional HOPS complex that promotes autophagosome-lysosome membrane fusion driven by STX17-SNAP29-VAMP8. May interact with VPS41. Mg(2+) serves as cofactor. Prenylated. Prenylation is required for association with cellular membranes.

It localises to the endoplasmic reticulum-Golgi intermediate compartment membrane. The protein localises to the melanosome. Its subcellular location is the endoplasmic reticulum membrane. The protein resides in the golgi apparatus membrane. It is found in the cytoplasmic vesicle. It localises to the secretory vesicle. The protein localises to the acrosome. Its subcellular location is the autophagosome membrane. The catalysed reaction is GTP + H2O = GDP + phosphate + H(+). Regulated by guanine nucleotide exchange factors (GEFs) which promote the exchange of bound GDP for free GTP, GTPase activating proteins (GAPs) which increase the GTP hydrolysis activity, and GDP dissociation inhibitors (GDIs) which inhibit the dissociation of the nucleotide from the GTPase. Functionally, the small GTPases Rab are key regulators of intracellular membrane trafficking, from the formation of transport vesicles to their fusion with membranes. Rabs cycle between active GTP-bound and inactive GDP-bound states. In their active state, drive transport of vesicular carriers from donor organelles to acceptor organelles to regulate the membrane traffic that maintains organelle identity and morphology. RAB2A regulates autophagy by promoting autophagosome-lysosome fusion via recruitment of the HOPS endosomal tethering complex; this process involves autophagosomal RAB2A and lysosomal RAB39A recruitment of HOPS subcomplexes VPS39-VPS11 and VPS41-VPS16-VPS18-VPS33A, respectively, which assemble into a functional complex to mediate membrane tethering and SNAREs-driven membrane fusion. Required for protein transport from the endoplasmic reticulum to the Golgi complex. Regulates the compacted morphology of the Golgi. Together with RAB2B, redundantly required for efficient autophagic flux. The sequence is that of Ras-related protein Rab-2A (Rab2a) from Rattus norvegicus (Rat).